Consider the following 225-residue polypeptide: NAD(P)H-quinone oxidoreductase subunit K, chloroplastic (225 aa).

[4Fe-4S] cluster is bound by residues C43, C44, C108, and C139.

This sequence belongs to the complex I 20 kDa subunit family. In terms of assembly, NDH is composed of at least 16 different subunits, 5 of which are encoded in the nucleus. [4Fe-4S] cluster serves as cofactor.

The protein localises to the plastid. It is found in the chloroplast thylakoid membrane. It catalyses the reaction a plastoquinone + NADH + (n+1) H(+)(in) = a plastoquinol + NAD(+) + n H(+)(out). The catalysed reaction is a plastoquinone + NADPH + (n+1) H(+)(in) = a plastoquinol + NADP(+) + n H(+)(out). In terms of biological role, NDH shuttles electrons from NAD(P)H:plastoquinone, via FMN and iron-sulfur (Fe-S) centers, to quinones in the photosynthetic chain and possibly in a chloroplast respiratory chain. The immediate electron acceptor for the enzyme in this species is believed to be plastoquinone. Couples the redox reaction to proton translocation, and thus conserves the redox energy in a proton gradient. The chain is NAD(P)H-quinone oxidoreductase subunit K, chloroplastic from Lepidium virginicum (Virginia pepperweed).